Here is a 520-residue protein sequence, read N- to C-terminus: 4-hydroxyphenylacetate 3-monooxygenase oxygenase component (520 aa).

FAD contacts are provided by residues 155 to 157 (HAI) and Thr196.

This sequence belongs to the FADH(2)-utilizing monooxygenase family. Homodimer. HPA 3-hydroxylase consists of a reductase component HpaC and an oxygenase component HpaB. Some form of interactions between the reductase and the oxygenase facilitate the transfer of FADH(-) to the oxygenase in P.aeruginosa, although interactions are not required in other species.

The enzyme catalyses 4-hydroxyphenylacetate + FADH2 + O2 = 3,4-dihydroxyphenylacetate + FAD + H2O + H(+). The protein operates within aromatic compound metabolism; 4-hydroxyphenylacetate degradation; pyruvate and succinate semialdehyde from 4-hydroxyphenylacetate: step 1/7. Its function is as follows. Oxygenase component of the 4-hydroxyphenylacetate (HPA) 3-hydroxylase. Catalyzes the hydroxylation of 4-hydroxyphenylacetate to form 3,4-dihydroxyphenylacetate, using FADH(-) provided by the reductase component HpaC to activate oxygen. To a lesser extent, can also use reduced FMN. In vitro, has hydroxylation activity toward tyrosol and various cinnamic acid derivatives, catalyzing the hydroxylation of p-coumaric acid, caffeic acid, ferulic acid, and coniferaldehyde. The chain is 4-hydroxyphenylacetate 3-monooxygenase oxygenase component from Pseudomonas aeruginosa (strain ATCC 15692 / DSM 22644 / CIP 104116 / JCM 14847 / LMG 12228 / 1C / PRS 101 / PAO1).